Reading from the N-terminus, the 391-residue chain is tRNA-specific 2-thiouridylase MnmA (391 aa).

Residues 9–16 (GMSGGVDS) and M35 contribute to the ATP site. An interaction with target base in tRNA region spans residues 95 to 97 (NPD). C100 serves as the catalytic Nucleophile. Cysteines 100 and 196 form a disulfide. An ATP-binding site is contributed by G124. The segment at 146-148 (KDQ) is interaction with tRNA. Catalysis depends on C196, which acts as the Cysteine persulfide intermediate. Residues 308–309 (RY) are interaction with tRNA. The span at 372-382 (TGQPGQATSTG) shows a compositional bias: polar residues. Positions 372-391 (TGQPGQATSTGHAPALAEAR) are disordered.

The protein belongs to the MnmA/TRMU family.

Its subcellular location is the cytoplasm. The enzyme catalyses S-sulfanyl-L-cysteinyl-[protein] + uridine(34) in tRNA + AH2 + ATP = 2-thiouridine(34) in tRNA + L-cysteinyl-[protein] + A + AMP + diphosphate + H(+). In terms of biological role, catalyzes the 2-thiolation of uridine at the wobble position (U34) of tRNA, leading to the formation of s(2)U34. In Burkholderia cenocepacia (strain ATCC BAA-245 / DSM 16553 / LMG 16656 / NCTC 13227 / J2315 / CF5610) (Burkholderia cepacia (strain J2315)), this protein is tRNA-specific 2-thiouridylase MnmA.